Here is a 786-residue protein sequence, read N- to C-terminus: Ribosome biogenesis protein BOP1 homolog (786 aa).

The segment covering 1–11 (MAKKSAIKRKV) has biased composition (basic residues). The tract at residues 1 to 161 (MAKKSAIKRK…NSDTSDEEDI (161 aa)) is disordered. Positions 17 to 26 (INEQASVSEQ) are enriched in polar residues. Composition is skewed to acidic residues over residues 44 to 53 (EDTTDDEGID), 60 to 72 (TSDD…DEEG), and 82 to 114 (SGED…DDAK). Residues 122 to 135 (KATLSKTTGDSSNI) show a composition bias toward polar residues. Over residues 141 to 150 (PRRDPSKPEY) the composition is skewed to basic and acidic residues. Positions 151–160 (ENSDTSDEED) are enriched in acidic residues. WD repeat units lie at residues 447–488 (GHTD…RTIE), 490–528 (NDVV…KLLV), 572–614 (THFK…SQIP), 617–655 (KSKG…LIKK), 658–697 (TNSK…KPYQ), 701–740 (LHRN…DLLQ), and 756–786 (RDEF…RLYT).

This sequence belongs to the WD repeat BOP1/ERB1 family.

It is found in the nucleus. The protein resides in the nucleolus. The protein localises to the nucleoplasm. In terms of biological role, required for maturation of ribosomal RNAs and formation of the large ribosomal subunit. In Drosophila grimshawi (Hawaiian fruit fly), this protein is Ribosome biogenesis protein BOP1 homolog.